Consider the following 703-residue polypeptide: Cyclomaltodextrin glucanotransferase (703 aa).

The N-terminal stretch at 1–29 (MNDLNDFLKTILLSFIFFLLLSLPTVAEA) is a signal peptide. The segment at 30-160 (DVTNKVNYSK…GIKVIMDFTP (131 aa)) is A1. Ca(2+) is bound by residues aspartate 52, asparagine 54, asparagine 57, and asparagine 58. A disulfide bond links cysteine 68 and cysteine 75. Residues glycine 76 and aspartate 78 each contribute to the Ca(2+) site. Residue 122 to 123 (YW) participates in substrate binding. Asparagine 161 provides a ligand contact to Ca(2+). The b stretch occupies residues 161 to 224 (NHSSPALETN…NLYDLADYDL (64 aa)). Histidine 162 is a substrate binding site. Isoleucine 212 contributes to the Ca(2+) binding site. 215–218 (NLYD) is a substrate binding site. Residue aspartate 221 coordinates Ca(2+). The interval 225–428 (NNTVMDQYLK…LRQTNSALGY (204 aa)) is A2. Arginine 249 lines the substrate pocket. Aspartate 251 acts as the Nucleophile in catalysis. A substrate-binding site is contributed by 254–255 (KH). Histidine 255 contacts Ca(2+). Glutamate 279 functions as the Proton donor in the catalytic mechanism. Substrate is bound by residues histidine 349, aspartate 393, and arginine 397. The interval 429–516 (GTTTERWLNE…SVAVWQVSNP (88 aa)) is c. The tract at residues 517-600 (STSPLIGQVG…SPTYKEFEVL (84 aa)) is d. Residues 520–598 (PLIGQVGPMM…IKSPTYKEFE (79 aa)) enclose the IPT/TIG domain. The CBM20 domain occupies 599 to 703 (VLSGNQVSVR…TGTDTVMINW (105 aa)). The tract at residues 601–703 (SGNQVSVRFG…TGTDTVMINW (103 aa)) is e.

This sequence belongs to the glycosyl hydrolase 13 family. In terms of assembly, monomer. It depends on Ca(2+) as a cofactor.

It is found in the secreted. The enzyme catalyses Cyclizes part of a (1-&gt;4)-alpha-D-glucan chain by formation of a (1-&gt;4)-alpha-D-glucosidic bond.. This Bacillus sp. (strain 1-1) protein is Cyclomaltodextrin glucanotransferase (cgt).